Reading from the N-terminus, the 469-residue chain is 3-isopropylmalate dehydratase large subunit (469 aa).

Positions 350, 410, and 413 each coordinate [4Fe-4S] cluster.

Belongs to the aconitase/IPM isomerase family. LeuC type 1 subfamily. Heterodimer of LeuC and LeuD. [4Fe-4S] cluster serves as cofactor.

The catalysed reaction is (2R,3S)-3-isopropylmalate = (2S)-2-isopropylmalate. It participates in amino-acid biosynthesis; L-leucine biosynthesis; L-leucine from 3-methyl-2-oxobutanoate: step 2/4. Catalyzes the isomerization between 2-isopropylmalate and 3-isopropylmalate, via the formation of 2-isopropylmaleate. The sequence is that of 3-isopropylmalate dehydratase large subunit from Rhizobium rhizogenes (strain K84 / ATCC BAA-868) (Agrobacterium radiobacter).